Here is a 149-residue protein sequence, read N- to C-terminus: 3-dehydroquinate dehydratase (149 aa).

Tyr-24 serves as the catalytic Proton acceptor. Substrate-binding residues include Asn-75, His-81, and Asp-88. The active-site Proton donor is His-101. Substrate is bound by residues Ile-102 to Ser-103 and Arg-112.

The protein belongs to the type-II 3-dehydroquinase family. In terms of assembly, homododecamer.

The catalysed reaction is 3-dehydroquinate = 3-dehydroshikimate + H2O. Its pathway is metabolic intermediate biosynthesis; chorismate biosynthesis; chorismate from D-erythrose 4-phosphate and phosphoenolpyruvate: step 3/7. Its function is as follows. Catalyzes a trans-dehydration via an enolate intermediate. The polypeptide is 3-dehydroquinate dehydratase (Methylobacterium radiotolerans (strain ATCC 27329 / DSM 1819 / JCM 2831 / NBRC 15690 / NCIMB 10815 / 0-1)).